The primary structure comprises 195 residues: UPF0215 protein TK2033 (195 aa).

The protein belongs to the UPF0215 family.

The sequence is that of UPF0215 protein TK2033 from Thermococcus kodakarensis (strain ATCC BAA-918 / JCM 12380 / KOD1) (Pyrococcus kodakaraensis (strain KOD1)).